The primary structure comprises 256 residues: MQSRLSWIFNPKTGKTVMLAFDHGYFQGPTIGLERIDINIAPLFEHADVLMCTRGILRSVVPPATNKPVVLRASGANSILAELSNEAVALSMDDAVRLNSCAVAAQVYIGSEYEHQSIKNIIQLVDAGMKVGMPTMAVTGVGKDMVRDQRYFSLATRIAAEMGAQIIKTYYVEKGFERIVAGCPVPIVIAGGKKLPERETLEMCWQAIDQGASGVDMGRNIFQSDHPVAMMKAVQAVVHHNETADRAYELYLSEKQ.

Lys168 (schiff-base intermediate with substrate) is an active-site residue.

This sequence belongs to the DeoC/FbaB aldolase family. In terms of assembly, homodecamer.

Its subcellular location is the cytoplasm. It carries out the reaction dihydroxyacetone phosphate + acetyl-CoA = 3-hydroxy-2,4-dioxopentyl phosphate + CoA. Its function is as follows. Involved in the degradation of phospho-AI-2, thereby terminating induction of the lsr operon and closing the AI-2 signaling cycle. Catalyzes the transfer of an acetyl moiety from 3-hydroxy-5-phosphonooxypentane-2,4-dione to CoA to form glycerone phosphate and acetyl-CoA. In Shigella flexneri, this protein is 3-hydroxy-5-phosphonooxypentane-2,4-dione thiolase (lsrF).